Reading from the N-terminus, the 422-residue chain is 3-isopropylmalate dehydratase large subunit (422 aa).

Positions 294, 354, and 357 each coordinate [4Fe-4S] cluster.

Belongs to the aconitase/IPM isomerase family. LeuC type 2 subfamily. In terms of assembly, heterodimer of LeuC and LeuD. The cofactor is [4Fe-4S] cluster.

It catalyses the reaction (2R,3S)-3-isopropylmalate = (2S)-2-isopropylmalate. It participates in amino-acid biosynthesis; L-leucine biosynthesis; L-leucine from 3-methyl-2-oxobutanoate: step 2/4. Its function is as follows. Catalyzes the isomerization between 2-isopropylmalate and 3-isopropylmalate, via the formation of 2-isopropylmaleate. The sequence is that of 3-isopropylmalate dehydratase large subunit from Mycolicibacterium smegmatis (strain ATCC 700084 / mc(2)155) (Mycobacterium smegmatis).